The following is a 926-amino-acid chain: Translation initiation factor IF-2 (926 aa).

Disordered regions lie at residues 1 to 185 (MTDS…EEVE) and 200 to 299 (EDKA…RRRG). Composition is skewed to low complexity over residues 13–24 (TGKKTLTLKPTG) and 70–96 (APAT…AAPQ). A compositionally biased stretch (polar residues) spans 110–133 (TNQYSQQRHPGQQNRPQASSQPSR). Basic and acidic residues predominate over residues 151-185 (MDARRRALAEAQVREVEDAKRRAEEEVRRQAEEVE). Residues 211-251 (APEPVAEPVAPVAETPRAADPAPRAPSPAGAKPAAGAPAPS) show a composition bias toward low complexity. A tr-type G domain is found at 424–591 (SRPPVVTIMG…AVLLQAEILD (168 aa)). The tract at residues 433–440 (GHVDHGKT) is G1. 433–440 (GHVDHGKT) provides a ligand contact to GTP. Residues 458-462 (GITQH) are G2. The segment at 479 to 482 (DTPG) is G3. GTP is bound by residues 479–483 (DTPGH) and 533–536 (NKID). The G4 stretch occupies residues 533 to 536 (NKID). The segment at 569–571 (SAK) is G5.

The protein belongs to the TRAFAC class translation factor GTPase superfamily. Classic translation factor GTPase family. IF-2 subfamily.

It is found in the cytoplasm. Its function is as follows. One of the essential components for the initiation of protein synthesis. Protects formylmethionyl-tRNA from spontaneous hydrolysis and promotes its binding to the 30S ribosomal subunits. Also involved in the hydrolysis of GTP during the formation of the 70S ribosomal complex. The polypeptide is Translation initiation factor IF-2 (Allorhizobium ampelinum (strain ATCC BAA-846 / DSM 112012 / S4) (Agrobacterium vitis (strain S4))).